The sequence spans 475 residues: MEGLLTRCRTLSALAACSLRHCRYIIHKCYHRAPGRGQRLVLSRMFQPQNLREDQVLSLEGRASDLTCKSQRLMLQVGLILPASPGCYHLMPYTVRAVEKLVRVIDQEMQAIGGQKINMPSLSPAELWRATSRWDLMGRELLRLRDRHGKEYCLGPTHEEAVTALVASQKKLSYKQLPLLLYQVTRKFRDEPRPRFGLLRGREFYMKDMYTFDSSSEAAQETYGLVCDAYCRLFDRLGLQWMKARADVGSIGGTMSHEFQLPVDIGEDRLVVCPSCHFSANTEILDLSQKICPDCQGPLTETKGIEVGHTFYLSTKYSSIFNALFTNAHGESLLAEMGCYGLGVTRILAAAIEVLSTEDCIRWPRLLAPYQVCVIPPKKGSKETAATEIVEKLYDDIMEAVPQLRGEVLLDDRTHLTIGNRLKDANKLGYPFVIIAGKRALEDPAHFEVWSQNTGEVVFLTKEGVMELLTGVHVV.

A mitochondrion-targeting transit peptide spans 1–29 (MEGLLTRCRTLSALAACSLRHCRYIIHKC).

It belongs to the class-II aminoacyl-tRNA synthetase family.

The protein localises to the mitochondrion matrix. The catalysed reaction is tRNA(Pro) + L-proline + ATP = L-prolyl-tRNA(Pro) + AMP + diphosphate. Its function is as follows. Mitochondrial aminoacyl-tRNA synthetase that catalyzes the specific attachment of the proline amino acid (aa) to the homologous transfer RNA (tRNA), further participating in protein synthesis. The reaction occurs in a two steps: proline is first activated by ATP to form Pro-AMP and then transferred to the acceptor end of tRNA(Pro). In Mus musculus (Mouse), this protein is Probable proline--tRNA ligase, mitochondrial (Pars2).